The following is a 358-amino-acid chain: Prostaglandin E2 receptor EP2 subtype (358 aa).

The Extracellular portion of the chain corresponds to 1-23 (MGNASNDSQSEDCETRQWLPPGE). N3 and N6 each carry an N-linked (GlcNAc...) asparagine glycan. Residues 24-47 (SPAISSVMFSAGVLGNLIALALLA) traverse the membrane as a helical segment. Residues 48-65 (RRWRGDVGCSAGRRSSLS) are Cytoplasmic-facing. A helical membrane pass occupies residues 66–91 (LFHVLVTELVFTDLLGTCLISPVVLA). Residues 92–111 (SYARNQTLVALAPESRACTY) lie on the Extracellular side of the membrane. N-linked (GlcNAc...) asparagine glycosylation is present at N96. A disulfide bridge connects residues C109 and C187. A helical membrane pass occupies residues 112–132 (FAFAMTFFSLATMLMLFAMAL). Residues 133–151 (ERYLSIGHPYFYQRRVSRS) are Cytoplasmic-facing. Residues 152-176 (GGLAVLPVIYAVSLLFCSLPLLDYG) form a helical membrane-spanning segment. The Extracellular segment spans residues 177–198 (QYVQYCPGTWCFIRHGRTAYLQ). The helical transmembrane segment at 199 to 223 (LYATLLLLLIVSVLACNFSVILNLI) threads the bilayer. Topologically, residues 224 to 262 (RMHRRSRRSRCGPSLGSGRGGPGARRRGERVSMAEETDH) are cytoplasmic. The tract at residues 231–253 (RSRCGPSLGSGRGGPGARRRGER) is disordered. The chain crosses the membrane as a helical span at residues 263–286 (LILLAIMTITFAVCSLPFTIFAYM). A glycan (N-linked (GlcNAc...) asparagine) is linked at N287. The Extracellular portion of the chain corresponds to 287–299 (NETSSRKEKWDLQ). Residues 300–323 (ALRFLSINSIIDPWVFAILRPPVL) traverse the membrane as a helical segment. Residues 324–358 (RLMRSVLCCRISLRTQDATQTSCSTQSDASKQADL) are Cytoplasmic-facing.

Belongs to the G-protein coupled receptor 1 family. Placenta and lung.

Its subcellular location is the cell membrane. Receptor for prostaglandin E2 (PGE2). The activity of this receptor is mediated by G(s) proteins that stimulate adenylate cyclase. The subsequent raise in intracellular cAMP is responsible for the relaxing effect of this receptor on smooth muscle. The sequence is that of Prostaglandin E2 receptor EP2 subtype (PTGER2) from Homo sapiens (Human).